Here is a 327-residue protein sequence, read N- to C-terminus: METDSMECVSSTGNEIHQNGNGHQSYQFSSTKTHGGAAAAAVVTNIVGPTATAPATSVYELLECPVCTYSMYPPIHQCHNGHTLCSTCKVRVHNRCPTCRQELGDIRCLALEKVAESLELPCKFYNLGCPEIFPYYSKLKHESLCNFRPYSCPYAGSECGIVGDIPFLVAHLRDDHKVDMHAGSTFNHRYVKSNPREVENATWMLTVFHCFGQYFCLHFEAFQLGMGPVYMAFLRFMGDEEDARSYSYSLEVGGSGRKLTWEGTPRSIRDSHRKVRDSNDGLIIQRNMALFFSGGDRKELKLRVTGKIWKEQHSPDSGLSIPNLSSS.

The segment at 1 to 27 (METDSMECVSSTGNEIHQNGNGHQSYQ) is disordered. The span at 8 to 27 (CVSSTGNEIHQNGNGHQSYQ) shows a compositional bias: polar residues. Residues 64–100 (CPVCTYSMYPPIHQCHNGHTLCSTCKVRVHNRCPTCR) form an RING-type zinc finger. The SBD stretch occupies residues 114-307 (VAESLELPCK…KELKLRVTGK (194 aa)). The SIAH-type zinc-finger motif lies at 117-177 (SLELPCKFYN…LVAHLRDDHK (61 aa)). Zn(2+) contacts are provided by C122, C129, H141, C145, C152, C159, H171, and H176.

The protein belongs to the SINA (Seven in absentia) family. Interacts with SINAT6. Interacts with WAV3. Interacts with FREE1. Interacts with ELC/VPS23A.

The protein resides in the endosome. It is found in the multivesicular body. It localises to the cytoplasmic vesicle. The protein localises to the autophagosome. It catalyses the reaction S-ubiquitinyl-[E2 ubiquitin-conjugating enzyme]-L-cysteine + [acceptor protein]-L-lysine = [E2 ubiquitin-conjugating enzyme]-L-cysteine + N(6)-ubiquitinyl-[acceptor protein]-L-lysine.. Its pathway is protein modification; protein ubiquitination. Functionally, E3 ubiquitin-protein ligase that mediates ubiquitination and subsequent proteasomal degradation of target proteins. E3 ubiquitin ligases accept ubiquitin from an E2 ubiquitin-conjugating enzyme in the form of a thioester and then directly transfers the ubiquitin to targeted substrates. It probably triggers the ubiquitin-mediated degradation of different substrates. Modulates directly the ubiquitination and proteasomal-dependent degradation of FREE1, a component of the ESCRT-I complex. Modulates directly the ubiquitination and proteasomal-dependent degradation of ELC/VPS23A, a component of the ESCRT-I complex. In Arabidopsis thaliana (Mouse-ear cress), this protein is E3 ubiquitin-protein ligase SINAT4.